The primary structure comprises 363 residues: Aminomethyltransferase (363 aa).

It belongs to the GcvT family. In terms of assembly, the glycine cleavage system is composed of four proteins: P, T, L and H.

The enzyme catalyses N(6)-[(R)-S(8)-aminomethyldihydrolipoyl]-L-lysyl-[protein] + (6S)-5,6,7,8-tetrahydrofolate = N(6)-[(R)-dihydrolipoyl]-L-lysyl-[protein] + (6R)-5,10-methylene-5,6,7,8-tetrahydrofolate + NH4(+). The glycine cleavage system catalyzes the degradation of glycine. In Thioalkalivibrio sulfidiphilus (strain HL-EbGR7), this protein is Aminomethyltransferase.